A 139-amino-acid polypeptide reads, in one-letter code: Large ribosomal subunit protein uL16 (139 aa).

The segment covering 1–16 has biased composition (basic residues); it reads MLIPRRVKHRKQHHPG. The segment at 1-25 is disordered; it reads MLIPRRVKHRKQHHPGRSGQATGGT.

It belongs to the universal ribosomal protein uL16 family. As to quaternary structure, part of the 50S ribosomal subunit.

Its function is as follows. Binds 23S rRNA and is also seen to make contacts with the A and possibly P site tRNAs. This is Large ribosomal subunit protein uL16 from Leifsonia xyli subsp. xyli (strain CTCB07).